A 400-amino-acid polypeptide reads, in one-letter code: Enoyl-[acyl-carrier-protein] reductase [NADH] 1 (400 aa).

Residues 48 to 53, 74 to 75, 111 to 112, and 139 to 140 contribute to the NAD(+) site; these read GSSSGY, FE, DA, and LA. Residue tyrosine 225 coordinates substrate. Tyrosine 235 (proton donor) is an active-site residue. NAD(+)-binding positions include lysine 244 and 273–275; that span reads VVT.

This sequence belongs to the TER reductase family. As to quaternary structure, monomer.

The enzyme catalyses a 2,3-saturated acyl-[ACP] + NAD(+) = a (2E)-enoyl-[ACP] + NADH + H(+). The protein operates within lipid metabolism; fatty acid biosynthesis. Functionally, involved in the final reduction of the elongation cycle of fatty acid synthesis (FAS II). Catalyzes the reduction of a carbon-carbon double bond in an enoyl moiety that is covalently linked to an acyl carrier protein (ACP). The chain is Enoyl-[acyl-carrier-protein] reductase [NADH] 1 from Photobacterium profundum (strain SS9).